The primary structure comprises 646 residues: Threonine--tRNA ligase (646 aa).

The region spanning 1 to 63 (MAQISLTFPD…ETDAKIAIHT (63 aa)) is the TGS domain. The segment at 247–544 (DHRKLGREME…LIENYAGKLP (298 aa)) is catalytic. The Zn(2+) site is built by cysteine 344, histidine 395, and histidine 521.

The protein belongs to the class-II aminoacyl-tRNA synthetase family. Homodimer. It depends on Zn(2+) as a cofactor.

It is found in the cytoplasm. The enzyme catalyses tRNA(Thr) + L-threonine + ATP = L-threonyl-tRNA(Thr) + AMP + diphosphate + H(+). Its function is as follows. Catalyzes the attachment of threonine to tRNA(Thr) in a two-step reaction: L-threonine is first activated by ATP to form Thr-AMP and then transferred to the acceptor end of tRNA(Thr). Also edits incorrectly charged L-seryl-tRNA(Thr). The protein is Threonine--tRNA ligase of Cereibacter sphaeroides (strain ATCC 17023 / DSM 158 / JCM 6121 / CCUG 31486 / LMG 2827 / NBRC 12203 / NCIMB 8253 / ATH 2.4.1.) (Rhodobacter sphaeroides).